The sequence spans 225 residues: PKHD-type hydroxylase HEAR3399 (225 aa).

Residues 77–177 (RYMPPLFNRY…RVCSFFWLQS (101 aa)) enclose the Fe2OG dioxygenase domain. Histidine 95, aspartate 97, and histidine 158 together coordinate Fe cation. Arginine 168 contributes to the 2-oxoglutarate binding site.

It depends on Fe(2+) as a cofactor. L-ascorbate is required as a cofactor.

The polypeptide is PKHD-type hydroxylase HEAR3399 (Herminiimonas arsenicoxydans).